The sequence spans 841 residues: Outer membrane usher protein MyfC (841 aa).

Residues 1–26 form the signal peptide; it reads MFFSLKNSVAKLIAFWAICLVLPVWA. An intrachain disulfide couples Cys817 to Cys840.

This sequence belongs to the fimbrial export usher family.

It localises to the cell outer membrane. Involved in the export and assembly of the MyfA fimbrial subunit. In Yersinia enterocolitica, this protein is Outer membrane usher protein MyfC (myfC).